The primary structure comprises 514 residues: ATP synthase subunit alpha (514 aa).

Position 170–177 (170–177 (GDRQIGKT)) interacts with ATP.

It belongs to the ATPase alpha/beta chains family. In terms of assembly, F-type ATPases have 2 components, CF(1) - the catalytic core - and CF(0) - the membrane proton channel. CF(1) has five subunits: alpha(3), beta(3), gamma(1), delta(1), epsilon(1). CF(0) has three main subunits: a(1), b(2) and c(9-12). The alpha and beta chains form an alternating ring which encloses part of the gamma chain. CF(1) is attached to CF(0) by a central stalk formed by the gamma and epsilon chains, while a peripheral stalk is formed by the delta and b chains.

The protein localises to the cell inner membrane. The enzyme catalyses ATP + H2O + 4 H(+)(in) = ADP + phosphate + 5 H(+)(out). In terms of biological role, produces ATP from ADP in the presence of a proton gradient across the membrane. The alpha chain is a regulatory subunit. This chain is ATP synthase subunit alpha, found in Pseudomonas syringae pv. tomato (strain ATCC BAA-871 / DC3000).